The primary structure comprises 1312 residues: Bifunctional protein PutA (1312 aa).

A proline dehydrogenase region spans residues Leu-228–Thr-574. The aldehyde dehydrogenase stretch occupies residues Gln-653 to Gly-1119. Catalysis depends on residues Glu-883 and Cys-917.

This sequence in the N-terminal section; belongs to the proline dehydrogenase family. It in the C-terminal section; belongs to the aldehyde dehydrogenase family. FAD serves as cofactor.

It carries out the reaction L-proline + a quinone = (S)-1-pyrroline-5-carboxylate + a quinol + H(+). The enzyme catalyses L-glutamate 5-semialdehyde + NAD(+) + H2O = L-glutamate + NADH + 2 H(+). It functions in the pathway amino-acid degradation; L-proline degradation into L-glutamate; L-glutamate from L-proline: step 1/2. Its pathway is amino-acid degradation; L-proline degradation into L-glutamate; L-glutamate from L-proline: step 2/2. Functionally, oxidizes proline to glutamate for use as a carbon and nitrogen source and also function as a transcriptional repressor of the put operon. This is Bifunctional protein PutA (putA) from Klebsiella aerogenes (Enterobacter aerogenes).